The sequence spans 423 residues: Putative competence-damage inducible protein (423 aa).

It belongs to the CinA family.

The protein is Putative competence-damage inducible protein of Streptococcus equi subsp. equi (strain 4047).